The chain runs to 180 residues: dCTP deaminase, dUMP-forming (180 aa).

Residues Arg96–Arg101, Asp113, Thr121–Glu123, Gln142, Tyr156, and Gln163 contribute to the dCTP site. Glu123 serves as the catalytic Proton donor/acceptor.

This sequence belongs to the dCTP deaminase family. Homotrimer.

It catalyses the reaction dCTP + 2 H2O = dUMP + NH4(+) + diphosphate. It functions in the pathway pyrimidine metabolism; dUMP biosynthesis; dUMP from dCTP: step 1/1. In terms of biological role, bifunctional enzyme that catalyzes both the deamination of dCTP to dUTP and the hydrolysis of dUTP to dUMP without releasing the toxic dUTP intermediate. The sequence is that of dCTP deaminase, dUMP-forming from Aquifex aeolicus (strain VF5).